Consider the following 453-residue polypeptide: Tubulin alpha chain (453 aa).

Position 11 (glutamine 11) interacts with GTP. Residue lysine 40 is modified to N6-acetyllysine. 6 residues coordinate GTP: glutamate 71, glycine 144, threonine 145, threonine 179, asparagine 206, and asparagine 228. Glutamate 71 is a Mg(2+) binding site. Glutamate 254 is an active-site residue.

Belongs to the tubulin family. As to quaternary structure, dimer of alpha and beta chains. A typical microtubule is a hollow water-filled tube with an outer diameter of 25 nm and an inner diameter of 15 nM. Alpha-beta heterodimers associate head-to-tail to form protofilaments running lengthwise along the microtubule wall with the beta-tubulin subunit facing the microtubule plus end conferring a structural polarity. Microtubules usually have 13 protofilaments but different protofilament numbers can be found in some organisms and specialized cells. The cofactor is Mg(2+). Post-translationally, undergoes a tyrosination/detyrosination cycle, the cyclic removal and re-addition of a C-terminal tyrosine residue by the enzymes tubulin tyrosine carboxypeptidase (TTCP) and tubulin tyrosine ligase (TTL), respectively. Acetylation of alpha chains at Lys-40 stabilizes microtubules and affects affinity and processivity of microtubule motors. This modification has a role in multiple cellular functions, ranging from cell motility, cell cycle progression or cell differentiation to intracellular trafficking and signaling.

It is found in the cytoplasm. Its subcellular location is the cytoskeleton. It carries out the reaction GTP + H2O = GDP + phosphate + H(+). Its function is as follows. Tubulin is the major constituent of microtubules, a cylinder consisting of laterally associated linear protofilaments composed of alpha- and beta-tubulin heterodimers. Microtubules grow by the addition of GTP-tubulin dimers to the microtubule end, where a stabilizing cap forms. Below the cap, tubulin dimers are in GDP-bound state, owing to GTPase activity of alpha-tubulin. In Plasmodium falciparum (isolate K1 / Thailand), this protein is Tubulin alpha chain.